A 567-amino-acid chain; its full sequence is MQSVLSLSFSQASLPLANRTLCSSNAAPSTPRNLRFCGLRREAFCFSPSKQLTSCRFHIQSRRIEVSAAASSSAGNGAPSKSFDYDLIIIGAGVGGHGAALHAVEKGLKTAIIEGDVVGGTCVNRGCVPSKALLAVSGRMRELQNEHHMKAFGLQVSAAGYDRQGVADHASNLATKIRNNLTNSMKALGVDILTGFGAVLGPQKVKYGDNIITGKDIIIATGSVPFVPKGIEVDGKTVITSDHALKLESVPDWIAIVGSGYIGLEFSDVYTALGSEVTFIEALDQLMPGFDPEISKLAQRVLINTRKIDYHTGVFASKITPAKDGKPVLIELIDAKTKEPKDTLEVDAALIATGRAPFTNGLGLENINVTTQRGFIPVDERMRVIDGNGKLVPHLYCIGDANGKLMLAHAASAQGISVVEQVTGRDHVLNHLSIPAACFTHPEISMVGLTEPQAREKAEKEGFKVSIAKTSFKANTKALAENEGEGLAKMIYRPDNGEILGVHIFGLHAADLIHEASNAIALGTRIQDIKLAVHAHPTLSEVVDELFKAAKVDSPASVTAQSVKVTV.

The transit peptide at 1-67 directs the protein to the chloroplast; that stretch reads MQSVLSLSFS…HIQSRRIEVS (67 aa). FAD-binding positions include 114-122, Lys-131, Gly-197, and 221-223; these read EGDVVGGTC and TGS. Cys-122 and Cys-127 form a disulfide bridge. NAD(+)-binding positions include 258 to 265, Glu-281, and Gly-354; that span reads GSGYIGLE. FAD contacts are provided by residues Asp-400 and 406–409; that span reads MLAH. His-536 (proton acceptor) is an active-site residue.

The protein belongs to the class-I pyridine nucleotide-disulfide oxidoreductase family. In terms of assembly, homodimer. Part of the plastidial pyruvate dehydrogenase complex (PDC) containing multiple copies of three enzymatic components: pyruvate dehydrogenase (E1), dihydrolipoamide acetyltransferase (E2) and lipoamide dehydrogenase (E3). It depends on FAD as a cofactor. As to expression, expressed mainly in flower buds and immature siliques, and to a lesser extent in flowers.

It is found in the plastid. It localises to the chloroplast stroma. The catalysed reaction is N(6)-[(R)-dihydrolipoyl]-L-lysyl-[protein] + NAD(+) = N(6)-[(R)-lipoyl]-L-lysyl-[protein] + NADH + H(+). Its function is as follows. Lipoamide dehydrogenase is a component of the plastidial pyruvate dehydrogenase complex (PDC). The chain is Dihydrolipoyl dehydrogenase 2, chloroplastic (LPD2) from Arabidopsis thaliana (Mouse-ear cress).